The sequence spans 191 residues: uncharacterized protein (191 aa).

It to E.coli YecM.

This is an uncharacterized protein from Haemophilus influenzae (strain ATCC 51907 / DSM 11121 / KW20 / Rd).